The chain runs to 189 residues: NADH-quinone oxidoreductase subunit B (189 aa).

[4Fe-4S] cluster contacts are provided by Cys39, Cys40, Cys104, and Cys135.

Belongs to the complex I 20 kDa subunit family. As to quaternary structure, NDH-1 is composed of 14 different subunits. Subunits NuoB, C, D, E, F, and G constitute the peripheral sector of the complex. [4Fe-4S] cluster serves as cofactor.

The protein localises to the cell inner membrane. The catalysed reaction is a quinone + NADH + 5 H(+)(in) = a quinol + NAD(+) + 4 H(+)(out). Its function is as follows. NDH-1 shuttles electrons from NADH, via FMN and iron-sulfur (Fe-S) centers, to quinones in the respiratory chain. The immediate electron acceptor for the enzyme in this species is believed to be a menaquinone. Couples the redox reaction to proton translocation (for every two electrons transferred, four hydrogen ions are translocated across the cytoplasmic membrane), and thus conserves the redox energy in a proton gradient. This chain is NADH-quinone oxidoreductase subunit B, found in Pelodictyon phaeoclathratiforme (strain DSM 5477 / BU-1).